The following is a 129-amino-acid chain: uncharacterized protein (129 aa).

The protein belongs to the HesB/IscA family.

This is an uncharacterized protein from Buchnera aphidicola subsp. Schizaphis graminum (strain Sg).